The primary structure comprises 916 residues: Nitrate reductase [NADH] 1 (916 aa).

Residues 1–77 (MAASVQPRQF…DDEEEEQEDW (77 aa)) form a disordered region. Positions 66 to 76 (GSDDEEEEQED) are enriched in acidic residues. C192 contributes to the Mo-molybdopterin binding site. The Cytochrome b5 heme-binding domain maps to 541–616 (GKQFTMSEVR…LDTYRIGELI (76 aa)). The heme site is built by H576 and H599. Positions 656–768 (RDKVPCQLVD…KGPLGHVEYT (113 aa)) constitute an FAD-binding FR-type domain. FAD-binding positions include 708–711 (RAYT), 725–729 (LIKVY), F730, F737, 742–744 (LMT), S792, and T795.

Belongs to the nitrate reductase family. In terms of assembly, homodimer. The cofactor is FAD. It depends on heme as a cofactor. Mo-molybdopterin is required as a cofactor.

It carries out the reaction nitrite + NAD(+) + H2O = nitrate + NADH + H(+). In terms of biological role, nitrate reductase is a key enzyme involved in the first step of nitrate assimilation in plants, fungi and bacteria. The sequence is that of Nitrate reductase [NADH] 1 (NIA1) from Oryza sativa subsp. japonica (Rice).